Consider the following 1001-residue polypeptide: Serine/threonine-protein kinase TAO1 (1001 aa).

Ser9 is subject to Phosphoserine. Residues 28 to 281 (FTDLREIGHG…SEELLKHMFV (254 aa)) enclose the Protein kinase domain. ATP contacts are provided by residues 34 to 42 (IGHGSFGAV) and Lys57. The active-site Proton acceptor is the Asp151. Disordered stretches follow at residues 324–380 (PAVE…DKSE) and 404–433 (ENYQ…SHYR). Positions 350 to 370 (SNQSIPSMSISASSQSSSVNS) are enriched in low complexity. Ser421 and Ser445 each carry phosphoserine. The stretch at 458–651 (SELREQMSGY…QTQKDLEHAM (194 aa)) forms a coiled coil. Positions 567 to 587 (KEELNENQSTPKKEKQEWLSK) are disordered. A compositionally biased stretch (basic and acidic residues) spans 577-587 (PKKEKQEWLSK). Thr669 carries the post-translational modification Phosphothreonine. Residues 754 to 877 (KAVLKRLKEE…LERQAREIEA (124 aa)) adopt a coiled-coil conformation. The interval 905 to 1001 (PGASSWSHNP…ISNGSHMSYT (97 aa)) is disordered. The span at 921–930 (HWGHPMGGTP) shows a compositional bias: low complexity. Ser965 bears the Phosphoserine mark. A compositionally biased stretch (polar residues) spans 975 to 1001 (GGRTEQGMSRSTSVTSQISNGSHMSYT).

Belongs to the protein kinase superfamily. STE Ser/Thr protein kinase family. STE20 subfamily. Self-associates. Interacts with MAP2K3. Interacts with SPRED1. Interacts with TESK1; the interaction inhibits TAOK1 kinase activity. Interacts with MAP3K7. Proteolytically processed by caspase-3 (CASP3). Post-translationally, autophosphorylated. Phosphorylated by ATM in response to DNA damage. Phosphorylated by LRRK2.

It localises to the cytoplasm. It carries out the reaction L-seryl-[protein] + ATP = O-phospho-L-seryl-[protein] + ADP + H(+). It catalyses the reaction L-threonyl-[protein] + ATP = O-phospho-L-threonyl-[protein] + ADP + H(+). Its activity is regulated as follows. Serine/threonine-protein kinase activity is inhibited by SPRED1. In terms of biological role, serine/threonine-protein kinase involved in various processes such as p38/MAPK14 stress-activated MAPK cascade, DNA damage response and regulation of cytoskeleton stability. Phosphorylates MAP2K3, MAP2K6 and MARK2. Acts as an activator of the p38/MAPK14 stress-activated MAPK cascade by mediating phosphorylation and subsequent activation of the upstream MAP2K3 and MAP2K6 kinases. Involved in G-protein coupled receptor signaling to p38/MAPK14. In response to DNA damage, involved in the G2/M transition DNA damage checkpoint by activating the p38/MAPK14 stress-activated MAPK cascade, probably by mediating phosphorylation of MAP2K3 and MAP2K6. Acts as a regulator of cytoskeleton stability by phosphorylating 'Thr-208' of MARK2, leading to activate MARK2 kinase activity and subsequent phosphorylation and detachment of MAPT/TAU from microtubules. Also acts as a regulator of apoptosis: regulates apoptotic morphological changes, including cell contraction, membrane blebbing and apoptotic bodies formation via activation of the MAPK8/JNK cascade. During fetal development, it plays an essential role in the regulation of neuronal differentiation and migration to the cortical plate. The sequence is that of Serine/threonine-protein kinase TAO1 (Taok1) from Mus musculus (Mouse).